A 430-amino-acid polypeptide reads, in one-letter code: Histidine--tRNA ligase (430 aa).

Belongs to the class-II aminoacyl-tRNA synthetase family. In terms of assembly, homodimer.

The protein localises to the cytoplasm. It carries out the reaction tRNA(His) + L-histidine + ATP = L-histidyl-tRNA(His) + AMP + diphosphate + H(+). This Acinetobacter baumannii (strain AB307-0294) protein is Histidine--tRNA ligase.